Reading from the N-terminus, the 310-residue chain is Deoxyribonuclease gamma (310 aa).

A signal peptide spans 1-25 (MSLHPASPRLASLLLFILALHDTLA). Residues 40 to 56 (KKENHEAMDIIVKIIKR) carry the Bipartite nuclear localization signal motif. Active-site residues include Glu-105 and His-160. Cys-199 and Cys-236 are oxidised to a cystine. The not required for free DNA-nuclease activity but required for activity towards liposome-coated DNA stretch occupies residues 289–310 (SRAFTNNRKSVSLKKRKKGNRS). The Nuclear localization signal motif lies at 301–307 (LKKRKKG).

This sequence belongs to the DNase I family. It depends on Ca(2+) as a cofactor. Mg(2+) serves as cofactor. In terms of processing, poly-ADP-ribosylated by PARP1. ADP-ribosylation negatively regulates enzymatic activity during apoptosis. Expressed at high levels in liver, spleen and testes. Expressed at lower levels in heart, lungs, skeletal muscle and kidney. Not expressed in brain. Predominantly expressed in macrophages; at protein level. Secreted by mononuclear phagocytes.

It localises to the nucleus. It is found in the endoplasmic reticulum. Its subcellular location is the secreted. Inhibited by zinc. Inhibited by heparin and proteolysis by plasmin. Its function is as follows. Has DNA hydrolytic activity. Is capable of both single- and double-stranded DNA cleavage, producing DNA fragments with 3'-OH ends. Can cleave chromatin to nucleosomal units and cleaves nucleosomal and liposome-coated DNA. Acts in internucleosomal DNA fragmentation (INDF) during apoptosis and necrosis. The role in apoptosis includes myogenic and neuronal differentiation, and BCR-mediated clonal deletion of self-reactive B cells. Is active on chromatin in apoptotic cell-derived membrane-coated microparticles and thus suppresses anti-DNA autoimmunity. Together with DNASE1, plays a key role in degrading neutrophil extracellular traps (NETs). NETs are mainly composed of DNA fibers and are released by neutrophils to bind pathogens during inflammation. Degradation of intravascular NETs by DNASE1 and DNASE1L3 is required to prevent formation of clots that obstruct blood vessels and cause organ damage following inflammation. The polypeptide is Deoxyribonuclease gamma (Mus musculus (Mouse)).